Consider the following 103-residue polypeptide: Protein RALF-like 18 (103 aa).

The signal sequence occupies residues 1 to 32 (MMNNMKLLIIAVMIISAALLPALVVGSRPVKC). Positions 33-58 (DNCMDGGEKEEIMKMSSGVDVSHRIL) are cleaved as a propeptide — removed in mature form. Residues Cys92 and Cys98 are joined by a disulfide bond.

Belongs to the plant rapid alkalinization factor (RALF) family. In terms of processing, proteolytically cleaved, probably by S1P, a subtilisin-like serine protease (subtilase).

The protein localises to the secreted. Functionally, cell signaling peptide that may regulate plant stress, growth, and development. Mediates a rapid alkalinization of extracellular space by mediating a transient increase in the cytoplasmic Ca(2+) concentration leading to a calcium-dependent signaling events through a cell surface receptor and a concomitant activation of some intracellular mitogen-activated protein kinases. The chain is Protein RALF-like 18 (RALFL18) from Arabidopsis thaliana (Mouse-ear cress).